Consider the following 172-residue polypeptide: uncharacterized protein (172 aa).

The region spanning 21–75 is the HTH cro/C1-type domain; sequence FKRILLELGLTLKEFSEISGIPYSTLYKVIQGKDFRVSTLIKILKTIRSFEKDEN. A DNA-binding region (H-T-H motif) is located at residues 32 to 51; sequence LKEFSEISGIPYSTLYKVIQ.

This is an uncharacterized protein from Methanocaldococcus jannaschii (strain ATCC 43067 / DSM 2661 / JAL-1 / JCM 10045 / NBRC 100440) (Methanococcus jannaschii).